The primary structure comprises 111 residues: SPbeta prophage-derived uncharacterized protein YopW (111 aa).

The sequence is that of SPbeta prophage-derived uncharacterized protein YopW (yopW) from Bacillus subtilis (strain 168).